The following is a 452-amino-acid chain: tRNA pseudouridine synthase Pus10 (452 aa).

Residues glutamate 71–proline 200 enclose the THUMP domain. Residue aspartate 269 is the Nucleophile of the active site. Tyrosine 335 and tyrosine 406 together coordinate substrate.

This sequence belongs to the pseudouridine synthase Pus10 family.

The enzyme catalyses uridine(54) in tRNA = pseudouridine(54) in tRNA. It carries out the reaction uridine(55) in tRNA = pseudouridine(55) in tRNA. In terms of biological role, responsible for synthesis of pseudouridine from uracil-54 and uracil-55 in the psi GC loop of transfer RNAs. In Methanothrix thermoacetophila (strain DSM 6194 / JCM 14653 / NBRC 101360 / PT) (Methanosaeta thermophila), this protein is tRNA pseudouridine synthase Pus10.